Consider the following 430-residue polypeptide: Phosphomethylpyrimidine synthase (430 aa).

Residues N67, M96, Y125, H161, 183–185 (SRG), 224–227 (DALR), and E263 each bind substrate. Zn(2+) is bound at residue H267. Y290 is a binding site for substrate. Residue H331 participates in Zn(2+) binding. [4Fe-4S] cluster is bound by residues C406, C409, and C413.

This sequence belongs to the ThiC family. In terms of assembly, homodimer. The cofactor is [4Fe-4S] cluster.

The enzyme catalyses 5-amino-1-(5-phospho-beta-D-ribosyl)imidazole + S-adenosyl-L-methionine = 4-amino-2-methyl-5-(phosphooxymethyl)pyrimidine + CO + 5'-deoxyadenosine + formate + L-methionine + 3 H(+). It participates in cofactor biosynthesis; thiamine diphosphate biosynthesis. In terms of biological role, catalyzes the synthesis of the hydroxymethylpyrimidine phosphate (HMP-P) moiety of thiamine from aminoimidazole ribotide (AIR) in a radical S-adenosyl-L-methionine (SAM)-dependent reaction. The polypeptide is Phosphomethylpyrimidine synthase (Campylobacter jejuni subsp. jejuni serotype O:2 (strain ATCC 700819 / NCTC 11168)).